Consider the following 80-residue polypeptide: uncharacterized protein (80 aa).

Positions 1-21 are cleaved as a signal peptide; that stretch reads MKKVLYGIFAISALAATSAWA. A disordered region spans residues 59–80; it reads AATGGGDGSNTGTTTTTTTSTQ. Residues 68-80 show a composition bias toward low complexity; the sequence is NTGTTTTTTTSTQ.

This is an uncharacterized protein from Escherichia coli O157:H7.